Consider the following 512-residue polypeptide: Kelch repeat protein C2 (512 aa).

One can recognise a BTB domain in the interval 2 to 67 (ESVIFSINGE…IRWKKINITI (66 aa)). Kelch repeat units follow at residues 216 to 261 (IKHN…LHNC), 262 to 307 (LYII…VNNG), 309 to 354 (LYVI…FVND), 356 to 403 (IYVM…EYDG), 405 to 449 (IYVI…SCGD), and 452 to 498 (LIIA…THKS).

It belongs to the poxviruses Kelch family.

The polypeptide is Kelch repeat protein C2 (Homo sapiens (Human)).